The following is a 131-amino-acid chain: Profilin-2 (131 aa).

This sequence belongs to the profilin family. Occurs in many kinds of cells as a complex with monomeric actin in a 1:1 ratio.

The protein resides in the cytoplasm. It is found in the cytoskeleton. Its function is as follows. Binds to actin and affects the structure of the cytoskeleton. At high concentrations, profilin prevents the polymerization of actin, whereas it enhances it at low concentrations. By binding to PIP2, it inhibits the formation of IP3 and DG. This chain is Profilin-2, found in Solanum lycopersicum (Tomato).